Consider the following 510-residue polypeptide: 2,3-bisphosphoglycerate-independent phosphoglycerate mutase (510 aa).

Residues Asp-13 and Ser-63 each contribute to the Mn(2+) site. Residue Ser-63 is the Phosphoserine intermediate of the active site. Residues His-124, 154–155 (RD), Arg-186, Arg-192, 262–265 (RADR), and Lys-334 each bind substrate. Residues Asp-401, His-405, Asp-442, His-443, and His-461 each coordinate Mn(2+).

This sequence belongs to the BPG-independent phosphoglycerate mutase family. In terms of assembly, monomer. Requires Mn(2+) as cofactor.

The catalysed reaction is (2R)-2-phosphoglycerate = (2R)-3-phosphoglycerate. Its pathway is carbohydrate degradation; glycolysis; pyruvate from D-glyceraldehyde 3-phosphate: step 3/5. In terms of biological role, catalyzes the interconversion of 2-phosphoglycerate and 3-phosphoglycerate. The sequence is that of 2,3-bisphosphoglycerate-independent phosphoglycerate mutase from Vibrio cholerae serotype O1 (strain ATCC 39541 / Classical Ogawa 395 / O395).